A 360-amino-acid chain; its full sequence is Phospho-N-acetylmuramoyl-pentapeptide-transferase (360 aa).

The next 10 helical transmembrane spans lie at A26 to L46, T73 to L93, S94 to V114, W132 to G152, I168 to S188, G199 to T219, L239 to Y259, V263 to L283, F288 to V308, and V338 to K358.

It belongs to the glycosyltransferase 4 family. MraY subfamily. Mg(2+) is required as a cofactor.

Its subcellular location is the cell inner membrane. It catalyses the reaction UDP-N-acetyl-alpha-D-muramoyl-L-alanyl-gamma-D-glutamyl-meso-2,6-diaminopimeloyl-D-alanyl-D-alanine + di-trans,octa-cis-undecaprenyl phosphate = di-trans,octa-cis-undecaprenyl diphospho-N-acetyl-alpha-D-muramoyl-L-alanyl-D-glutamyl-meso-2,6-diaminopimeloyl-D-alanyl-D-alanine + UMP. It functions in the pathway cell wall biogenesis; peptidoglycan biosynthesis. Catalyzes the initial step of the lipid cycle reactions in the biosynthesis of the cell wall peptidoglycan: transfers peptidoglycan precursor phospho-MurNAc-pentapeptide from UDP-MurNAc-pentapeptide onto the lipid carrier undecaprenyl phosphate, yielding undecaprenyl-pyrophosphoryl-MurNAc-pentapeptide, known as lipid I. This Actinobacillus succinogenes (strain ATCC 55618 / DSM 22257 / CCUG 43843 / 130Z) protein is Phospho-N-acetylmuramoyl-pentapeptide-transferase.